A 393-amino-acid chain; its full sequence is Potassium channel subfamily K member 4 (393 aa).

Residues 1-3 are Cytoplasmic-facing; it reads MRS. A helical membrane pass occupies residues 4–24; the sequence is TTLLALLALVLLYLVSGALVF. Over 25–87 the chain is Extracellular; sequence RALEQPHEQQ…NSTSNSSHSA (63 aa). Residues asparagine 78 and asparagine 82 are each glycosylated (N-linked (GlcNAc...) asparagine). Residues 88 to 102 constitute an intramembrane region (helical); that stretch reads WDLGSAFFFSGTIIT. Residues threonine 103, isoleucine 104, glycine 105, and tyrosine 106 each coordinate K(+). The interval 103–108 is selectivity filter 1; sequence TIGYGN. An intramembrane segment occupies 103–109; it reads TIGYGNV. The Extracellular portion of the chain corresponds to 110–117; sequence ALRTDAGR. The chain crosses the membrane as a helical span at residues 118–150; that stretch reads LFCIFYALVGIPLFGILLAGVGDRLGSSLRHGI. At 151–172 the chain is on the cytoplasmic side; that stretch reads GHIEAIFLKWHVPPELVRVLSA. A helical transmembrane segment spans residues 173 to 194; it reads MLFLLIGCLLFVLTPTFVFCYM. Over 195–199 the chain is Extracellular; that stretch reads EDWSK. The helical intramembrane region spans 200 to 213; it reads LEAIYFVIVTLTTV. Residues threonine 212, valine 213, glycine 214, and phenylalanine 215 each contribute to the K(+) site. The selectivity filter 2 stretch occupies residues 212–217; that stretch reads TVGFGD. Residues 214–219 lie within the membrane without spanning it; that stretch reads GFGDYV. The Extracellular portion of the chain corresponds to 220 to 233; sequence AGADPRQDSPAYQP. Residues 234–260 form a helical membrane-spanning segment; it reads LVWFWILLGLAYFASVLTTIGNWLRVV. Residues 261–393 are Cytoplasmic-facing; that stretch reads SRRTRAEMGG…GRPRDKGVPV (133 aa). The segment at 285 to 393 is disordered; it reads RVTQRAGPAA…GRPRDKGVPV (109 aa). Positions 319-332 are enriched in pro residues; that stretch reads SPSPPEKAQPPSPP. Basic residues predominate over residues 365 to 384; it reads PRGRRRPNPPRKPVRPRGPG.

It belongs to the two pore domain potassium channel (TC 1.A.1.8) family. As to quaternary structure, homodimer; disulfide-linked. Forms heterodimers with other 2-pore domain K(+) channel subunits, such as KCNK2 and KCNK10. In terms of processing, N-glycosylated.

It is found in the cell membrane. The protein resides in the cell projection. It localises to the axon. The catalysed reaction is K(+)(in) = K(+)(out). It carries out the reaction Rb(+)(in) = Rb(+)(out). The enzyme catalyses Cs(+)(in) = Cs(+)(out). With respect to regulation, activated by mechanical stretch and arachidonic acid. Its function is as follows. K(+) channel that conducts voltage-dependent outward rectifying currents upon membrane depolarization. Voltage sensing is coupled to K(+) electrochemical gradient in an 'ion flux gating' mode where outward but not inward ion flow opens the gate. Converts to voltage-independent 'leak' conductance mode upon stimulation by various stimuli including mechanical membrane stretch, basic pH, heat and lipids. Homo- and heterodimerizes to form functional channels with distinct regulatory and gating properties. At trigeminal A-beta afferent nerves, the heterodimer of KCNK2/TREK-1 and KCNK4/TRAAK is mostly coexpressed at nodes of Ranvier where it conducts voltage-independent mechanosensitive and thermosensitive currents, allowing rapid action potential repolarization, high speed and high frequence saltatory conduction on myelinated nerves to ensure prompt sensory responses. Permeable to other monovalent cations such as Rb(+) and Cs(+). This chain is Potassium channel subfamily K member 4, found in Homo sapiens (Human).